We begin with the raw amino-acid sequence, 292 residues long: Imipenem-hydrolyzing beta-lactamase (292 aa).

A signal peptide spans 1 to 27 (MSLNVKQSRIAILFSSCLISISFFSQA). A disulfide bond links C70 and C240. S71 acts as the Acyl-ester intermediate in catalysis. Residue 236 to 238 (KTG) coordinates substrate.

It belongs to the class-A beta-lactamase family.

The enzyme catalyses a beta-lactam + H2O = a substituted beta-amino acid. In terms of biological role, hydrolyzes carbapenems such as imipenem, which are extended-spectrum beta-lactam antibiotics. This Enterobacter cloacae protein is Imipenem-hydrolyzing beta-lactamase (nmcA).